A 534-amino-acid polypeptide reads, in one-letter code: Cytokinin dehydrogenase 1 (534 aa).

Residues M1 to A18 form the signal peptide. 3 N-linked (GlcNAc...) asparagine glycosylation sites follow: N52, N63, and N89. One can recognise an FAD-binding PCMH-type domain in the interval T65 to A245. The FAD site is built by F100, G102, R103, and G104. Position 105 is a pros-8alpha-FAD histidine (H105). FAD contacts are provided by S106 and Q110. N-linked (GlcNAc...) asparagine glycosylation occurs at N134. FAD contacts are provided by D169, T174, S180, I184, and I235. D169 contacts N(6)-dimethylallyladenine. D169 is a trans-zeatin binding site. 3 N-linked (GlcNAc...) asparagine glycosylation sites follow: N294, N323, and N338. E381 contacts N(6)-dimethylallyladenine. Residue E381 participates in trans-zeatin binding. The N-linked (GlcNAc...) asparagine glycan is linked to N434. A trans-zeatin-binding site is contributed by S456. Y491, S527, and Q530 together coordinate FAD.

This sequence belongs to the oxygen-dependent FAD-linked oxidoreductase family. As to quaternary structure, monomer. It depends on FAD as a cofactor. Post-translationally, glycosylated; with approximately 10 hexose residues per site. As to expression, expressed in immature kernels and unpollinated cobs. Weakly expressed in kernels harvested two weeks after anthesis.

The protein resides in the secreted. Its subcellular location is the extracellular space. The catalysed reaction is N(6)-dimethylallyladenine + A + H2O = 3-methyl-2-butenal + adenine + AH2. Competitive inhibition by phenylureas. Catalyzes the oxidation of cytokinins, a family of N(6)-substituted adenine derivatives that are plant hormones, where the substituent is an isopentenyl group. Cleaves trans-zeatin, N(6)-dimethylallyladenine (isopentenyladenine), isopentenyladenosine, zeatin riboside and cis-zeatin, but not dihydrozeatin, kinetin and benzylaminopurine. The sequence is that of Cytokinin dehydrogenase 1 (CKX1) from Zea mays (Maize).